A 207-amino-acid chain; its full sequence is Small ribosomal subunit protein uS4 (207 aa).

Residues 96–156 form the S4 RNA-binding domain; that stretch reads SRLDNTVYRM…KKSHKQSRIR (61 aa).

Belongs to the universal ribosomal protein uS4 family. As to quaternary structure, part of the 30S ribosomal subunit. Contacts protein S5. The interaction surface between S4 and S5 is involved in control of translational fidelity.

Its function is as follows. One of the primary rRNA binding proteins, it binds directly to 16S rRNA where it nucleates assembly of the body of the 30S subunit. With S5 and S12 plays an important role in translational accuracy. This Blochmanniella pennsylvanica (strain BPEN) protein is Small ribosomal subunit protein uS4.